Reading from the N-terminus, the 361-residue chain is Chorismate synthase (361 aa).

NADP(+) is bound by residues arginine 48 and arginine 54. Residues 125-127 (RSS), 238-239 (NA), glycine 278, 293-297 (KPTSS), and arginine 319 contribute to the FMN site.

It belongs to the chorismate synthase family. Homotetramer. The cofactor is FMNH2.

It catalyses the reaction 5-O-(1-carboxyvinyl)-3-phosphoshikimate = chorismate + phosphate. The protein operates within metabolic intermediate biosynthesis; chorismate biosynthesis; chorismate from D-erythrose 4-phosphate and phosphoenolpyruvate: step 7/7. Functionally, catalyzes the anti-1,4-elimination of the C-3 phosphate and the C-6 proR hydrogen from 5-enolpyruvylshikimate-3-phosphate (EPSP) to yield chorismate, which is the branch point compound that serves as the starting substrate for the three terminal pathways of aromatic amino acid biosynthesis. This reaction introduces a second double bond into the aromatic ring system. This is Chorismate synthase from Shigella boydii serotype 18 (strain CDC 3083-94 / BS512).